We begin with the raw amino-acid sequence, 524 residues long: AAA ATPase forming ring-shaped complexes (524 aa).

Positions 1-29 (MGMGQEKHTDAASQSRDPEAVAAHENDQL) are disordered. Residues 22–59 (AAHENDQLRQRNHALAKALTRATEELRKAKAQLEQFMA) adopt a coiled-coil conformation. 250-255 (GNGKTL) lines the ATP pocket.

Belongs to the AAA ATPase family. In terms of assembly, homohexamer. Assembles into a hexameric ring structure.

This chain is AAA ATPase forming ring-shaped complexes, found in Bifidobacterium animalis subsp. lactis (strain BB-12).